The following is a 150-amino-acid chain: D-aminoacyl-tRNA deacylase (150 aa).

A Gly-cisPro motif, important for rejection of L-amino acids motif is present at residues G138–P139.

This sequence belongs to the DTD family. In terms of assembly, homodimer.

It is found in the cytoplasm. The enzyme catalyses glycyl-tRNA(Ala) + H2O = tRNA(Ala) + glycine + H(+). The catalysed reaction is a D-aminoacyl-tRNA + H2O = a tRNA + a D-alpha-amino acid + H(+). In terms of biological role, an aminoacyl-tRNA editing enzyme that deacylates mischarged D-aminoacyl-tRNAs. Also deacylates mischarged glycyl-tRNA(Ala), protecting cells against glycine mischarging by AlaRS. Acts via tRNA-based rather than protein-based catalysis; rejects L-amino acids rather than detecting D-amino acids in the active site. By recycling D-aminoacyl-tRNA to D-amino acids and free tRNA molecules, this enzyme counteracts the toxicity associated with the formation of D-aminoacyl-tRNA entities in vivo and helps enforce protein L-homochirality. In Cytophaga hutchinsonii (strain ATCC 33406 / DSM 1761 / CIP 103989 / NBRC 15051 / NCIMB 9469 / D465), this protein is D-aminoacyl-tRNA deacylase.